The chain runs to 84 residues: DNA-directed RNA polymerase subunit Rpo5 (84 aa).

The protein belongs to the archaeal Rpo5/eukaryotic RPB5 RNA polymerase subunit family. Part of the 13-subunit RNA polymerase complex.

It localises to the cytoplasm. It carries out the reaction RNA(n) + a ribonucleoside 5'-triphosphate = RNA(n+1) + diphosphate. In terms of biological role, DNA-dependent RNA polymerase (RNAP) catalyzes the transcription of DNA into RNA using the four ribonucleoside triphosphates as substrates. The protein is DNA-directed RNA polymerase subunit Rpo5 of Saccharolobus solfataricus (strain ATCC 35092 / DSM 1617 / JCM 11322 / P2) (Sulfolobus solfataricus).